We begin with the raw amino-acid sequence, 1357 residues long: DNA-directed RNA polymerase subunit beta (1357 aa).

The protein belongs to the RNA polymerase beta chain family. In terms of assembly, the RNAP catalytic core consists of 2 alpha, 1 beta, 1 beta' and 1 omega subunit. When a sigma factor is associated with the core the holoenzyme is formed, which can initiate transcription.

It catalyses the reaction RNA(n) + a ribonucleoside 5'-triphosphate = RNA(n+1) + diphosphate. Its function is as follows. DNA-dependent RNA polymerase catalyzes the transcription of DNA into RNA using the four ribonucleoside triphosphates as substrates. This is DNA-directed RNA polymerase subunit beta from Pseudomonas fluorescens (strain SBW25).